The sequence spans 730 residues: Actin filament-associated protein 1 (730 aa).

M1 is subject to N-acetylmethionine. Residues 47–91 (KDHAQKQETANSLPAPPQMPLPEIPQPWLPPDSGPPPLPTSSLPE) form a disordered region. The span at 60–85 (PAPPQMPLPEIPQPWLPPDSGPPPLP) shows a compositional bias: pro residues. The short motif at 71 to 74 (PQPW) is the SH3-binding element. Positions 94–97 (YEEA) match the SH2-binding 1 motif. Residues 119–140 (SSSYESYDEEEEDGKGKKTRHQ) are disordered. The PH 1 domain maps to 153–249 (DAKICAFLLR…WLKVIKEAYS (97 aa)). Residues 252 to 292 (SGPVDSECPPPPSSPVHKAELEKKLSSERPSSDGEGVVENG) are disordered. Over residues 268–283 (HKAELEKKLSSERPSS) the composition is skewed to basic and acidic residues. Phosphoserine occurs at positions 282 and 283. A PH 2 domain is found at 347-441 (DVPTCGYLNV…WIGILLAETG (95 aa)). The SH2-binding 2 motif lies at 451–456 (YDYIDV). Positions 512–537 (KGKKPPVASNGVTGKGKTLSSQPKKA) are disordered. A Phosphoserine modification is found at S548. Residues 557-648 (KNRVEADAKR…VKESLKKALA (92 aa)) are a coiled coil. Residues 594–637 (DLRAAIEVNAGRKPQAILEEKLKQLEEECRQKEAERVSLELELT) are interaction with F-actin. S664, S665, and S668 each carry phosphoserine. The residue at position 675 (T675) is a Phosphothreonine. Phosphoserine occurs at positions 679 and 687.

Monomer and homomultimer. Interacts via its C-terminus with F-actin; probably involving AFAP1 multimers. Interacts with activated SRC SH3-SH2 domains. Interacts via its PH 1 domain with PRKCA, PRKCB and PRKCI. Phosphorylated on tyrosine residues by SRC. As to expression, low expression in normal breast epithelial cell line MCF-10A and in tumorigenic breast cancer cell lines MCF-7, T-47D and ZR-75-1. Highly expressed in the invasive breast cancer cell lines MDA-MB-231 and MDA-MB-435. Overexpressed in prostate carcinoma.

The protein resides in the cytoplasm. It is found in the cytoskeleton. The protein localises to the stress fiber. Its function is as follows. Can cross-link actin filaments into both network and bundle structures. May modulate changes in actin filament integrity and induce lamellipodia formation. May function as an adapter molecule that links other proteins, such as SRC and PKC to the actin cytoskeleton. Seems to play a role in the development and progression of prostate adenocarcinoma by regulating cell-matrix adhesions and migration in the cancer cells. This is Actin filament-associated protein 1 (AFAP1) from Homo sapiens (Human).